Reading from the N-terminus, the 89-residue chain is Small ribosomal subunit protein uS15 (89 aa).

Belongs to the universal ribosomal protein uS15 family. Part of the 30S ribosomal subunit. Forms a bridge to the 50S subunit in the 70S ribosome, contacting the 23S rRNA.

One of the primary rRNA binding proteins, it binds directly to 16S rRNA where it helps nucleate assembly of the platform of the 30S subunit by binding and bridging several RNA helices of the 16S rRNA. Its function is as follows. Forms an intersubunit bridge (bridge B4) with the 23S rRNA of the 50S subunit in the ribosome. The protein is Small ribosomal subunit protein uS15 of Buchnera aphidicola subsp. Cinara cedri (strain Cc).